We begin with the raw amino-acid sequence, 438 residues long: Flagellum-specific ATP synthase (438 aa).

Positions 119-139 are disordered; the sequence is GLSPVSTEQSPPNPMKRPPIR. Residue 165-172 coordinates ATP; that stretch reads AGSGVGKS.

This sequence belongs to the ATPase alpha/beta chains family.

Its subcellular location is the cytoplasm. It catalyses the reaction ATP + H2O + 4 H(+)(in) = ADP + phosphate + 5 H(+)(out). Probable catalytic subunit of a protein translocase for flagellum-specific export, or a proton translocase involved in local circuits at the flagellum. This Bacillus subtilis (strain 168) protein is Flagellum-specific ATP synthase (fliI).